The chain runs to 333 residues: Threonine-phosphate decarboxylase (333 aa).

Position 199 is an N6-(pyridoxal phosphate)lysine (lysine 199).

It belongs to the class-I pyridoxal-phosphate-dependent aminotransferase family. In terms of assembly, homodimer. Requires pyridoxal 5'-phosphate as cofactor.

It localises to the cytoplasm. It carries out the reaction O-phospho-L-threonine + H(+) = (R)-1-aminopropan-2-yl phosphate + CO2. Its pathway is cofactor biosynthesis; adenosylcobalamin biosynthesis. Its function is as follows. Decarboxylates L-threonine-O-3-phosphate to yield (R)-1-amino-2-propanol O-2-phosphate, the precursor for the linkage between the nucleotide loop and the corrin ring in cobalamin. This Sinorhizobium sp protein is Threonine-phosphate decarboxylase (cobC).